The primary structure comprises 148 residues: Probable glycine cleavage system H protein 2 (148 aa).

A Lipoyl-binding domain is found at 32-114 (TIVVGITDLA…YGKGWLVKMK (83 aa)). An N6-lipoyllysine modification is found at lysine 73.

This sequence belongs to the GcvH family. The glycine cleavage system is composed of four proteins: P, T, L and H. Requires (R)-lipoate as cofactor.

In terms of biological role, the glycine cleavage system catalyzes the degradation of glycine. The H protein shuttles the methylamine group of glycine from the P protein to the T protein. This Saccharolobus solfataricus (strain ATCC 35092 / DSM 1617 / JCM 11322 / P2) (Sulfolobus solfataricus) protein is Probable glycine cleavage system H protein 2.